A 139-amino-acid polypeptide reads, in one-letter code: Gastrula zinc finger protein XlCGF29.1 (139 aa).

5 C2H2-type zinc fingers span residues 6-28 (FTCT…LLIH), 34-56 (FDST…LSTH), 62-84 (FVCT…LHSH), 90-112 (FPCS…LRHH), and 117-139 (FPCT…QMIH).

The protein belongs to the krueppel C2H2-type zinc-finger protein family.

It is found in the nucleus. Functionally, may be involved in transcriptional regulation. This Xenopus laevis (African clawed frog) protein is Gastrula zinc finger protein XlCGF29.1.